The chain runs to 441 residues: Protein translocase subunit SecY (441 aa).

10 helical membrane-spanning segments follow: residues 24-44 (LFVL…VPGI), 77-97 (ILAL…LLAT), 123-143 (ATVV…PNML), 152-172 (FSFY…LMWL), 181-201 (IGNG…PSAI), 215-235 (PLVL…VVFV), 272-292 (VMPA…TQWF), 313-333 (PLYL…YTAM), 373-393 (LIGG…TSAW), and 397-417 (FYFG…FIVQ).

It belongs to the SecY/SEC61-alpha family. In terms of assembly, component of the Sec protein translocase complex. Heterotrimer consisting of SecY, SecE and SecG subunits. The heterotrimers can form oligomers, although 1 heterotrimer is thought to be able to translocate proteins. Interacts with the ribosome. Interacts with SecDF, and other proteins may be involved. Interacts with SecA.

The protein resides in the cell inner membrane. Its function is as follows. The central subunit of the protein translocation channel SecYEG. Consists of two halves formed by TMs 1-5 and 6-10. These two domains form a lateral gate at the front which open onto the bilayer between TMs 2 and 7, and are clamped together by SecE at the back. The channel is closed by both a pore ring composed of hydrophobic SecY resides and a short helix (helix 2A) on the extracellular side of the membrane which forms a plug. The plug probably moves laterally to allow the channel to open. The ring and the pore may move independently. The sequence is that of Protein translocase subunit SecY from Haemophilus influenzae (strain ATCC 51907 / DSM 11121 / KW20 / Rd).